The sequence spans 414 residues: Membrane protein UL43 (414 aa).

Transmembrane regions (helical) follow at residues 39–59, 61–81, 96–116, 121–141, 148–168, and 184–204; these read GFAHLWLQAATLGFVGSVVLS, GPYADAMSGAFVIGSTGLGFL, AWLRLVGGGAAVALWSLGEAG, VPGPATQCLALGAAYAALLVL, LFLLAPRPLFVGTLGVVVGGL, and AAALTAAVVAGLGTTAAGDSF. Positions 225 to 253 are disordered; it reads PRYAPEDAERPTDHGPLLPSTHHQRSPRV. A compositionally biased stretch (basic and acidic residues) spans 228-237; the sequence is APEDAERPTD. 2 helical membrane-spanning segments follow: residues 339–359 and 383–403; these read GLMFVVPDIAVYAMLGGAVWI and ATLRGLFFSVYALGFAAGVLV.

Belongs to the alphaherpesvirinae HHV-1 UL43 family.

The protein localises to the membrane. In Homo sapiens (Human), this protein is Membrane protein UL43.